The sequence spans 322 residues: Cytochrome f (322 aa).

Positions 1 to 36 (MQKNRNTFSWVKEQMTRCISVSMMIYVITRASISNA) are cleaved as a signal peptide. Residues tyrosine 37, cysteine 57, cysteine 60, and histidine 61 each coordinate heme. Residues 288–308 (IQGLLFFLASVILAQIFLVLK) traverse the membrane as a helical segment.

It belongs to the cytochrome f family. In terms of assembly, the 4 large subunits of the cytochrome b6-f complex are cytochrome b6, subunit IV (17 kDa polypeptide, petD), cytochrome f and the Rieske protein, while the 4 small subunits are PetG, PetL, PetM and PetN. The complex functions as a dimer. It depends on heme as a cofactor.

It localises to the plastid. Its subcellular location is the chloroplast thylakoid membrane. Its function is as follows. Component of the cytochrome b6-f complex, which mediates electron transfer between photosystem II (PSII) and photosystem I (PSI), cyclic electron flow around PSI, and state transitions. In Nymphaea alba (White water-lily), this protein is Cytochrome f.